A 250-amino-acid polypeptide reads, in one-letter code: Small ribosomal subunit protein uS3 (250 aa).

Residues 39–111 enclose the KH type-2 domain; sequence IRTLIKNHYP…KIQINIFEVK (73 aa).

The protein belongs to the universal ribosomal protein uS3 family. As to quaternary structure, part of the 30S ribosomal subunit. Forms a tight complex with proteins S10 and S14.

Binds the lower part of the 30S subunit head. Binds mRNA in the 70S ribosome, positioning it for translation. The sequence is that of Small ribosomal subunit protein uS3 from Elm witches'-broom phytoplasma.